Here is a 345-residue protein sequence, read N- to C-terminus: Delta(1)-pyrroline-2-carboxylate reductase (345 aa).

The active-site Charge relay system is the Ser-47. The active-site Proton donor is His-48. Residue Arg-52 coordinates substrate. 121–125 (HFSAL) contributes to the NADP(+) binding site. Thr-161 is a substrate binding site. 179–181 (DFA) lines the NADP(+) pocket. Residue 187–188 (RG) coordinates substrate. The active-site Charge relay system is Glu-189. Residues 230–231 (HK) and 305–311 (RLPSGRR) contribute to the NADP(+) site.

This sequence belongs to the LDH2/MDH2 oxidoreductase family. Homodimer.

The enzyme catalyses L-proline + NAD(+) = 1-pyrroline-2-carboxylate + NADH + H(+). It catalyses the reaction L-proline + NADP(+) = 1-pyrroline-2-carboxylate + NADPH + H(+). Functionally, catalyzes the reduction of Delta(1)-pyrroline-2-carboxylate (Pyr2C) to L-proline, using NADPH as the electron donor. Is likely involved in a degradation pathway that converts trans-3-hydroxy-L-proline (t3LHyp) to L-proline, which would allow A.tumefaciens to grow on t3LHyp as a sole carbon source. The chain is Delta(1)-pyrroline-2-carboxylate reductase from Agrobacterium fabrum (strain C58 / ATCC 33970) (Agrobacterium tumefaciens (strain C58)).